Reading from the N-terminus, the 305-residue chain is uncharacterized protein (305 aa).

Transmembrane regions (helical) follow at residues 4–24, 38–58, 67–87, 95–115, 125–145, 152–172, 183–203, 215–235, 250–270, and 272–292; these read LNIY…FNLA, AWRF…TEGI, AVSY…LFFV, VNGA…ARII, VLGI…GSIE, ISGG…YGVL, LSTT…VSLF, IGVW…GYLW, LFFN…GTPI, and VFQV…SGVI. EamA domains are found at residues 15 to 140 and 164 to 290; these read IFTG…LVIT and VCWA…TASG.

This sequence belongs to the EamA transporter family.

It is found in the cell membrane. This is an uncharacterized protein from Bacillus subtilis (strain 168).